The following is a 263-amino-acid chain: Large ribosomal subunit protein uL10m (263 aa).

The transit peptide at 1-29 directs the protein to the mitochondrion; the sequence is MPFSVEVEVFFLLVEDKLGWLPTLQPVRH. Residues 241 to 263 are disordered; that stretch reads QHEGDCATSTEGKPHPPDPAPDS.

This sequence belongs to the universal ribosomal protein uL10 family. Component of the mitochondrial ribosome large subunit (39S) which comprises a 16S rRNA and about 50 distinct proteins.

The protein localises to the mitochondrion. In Rattus norvegicus (Rat), this protein is Large ribosomal subunit protein uL10m (Mrpl10).